The primary structure comprises 160 residues: Cytochrome b6-f complex subunit 4 (160 aa).

Helical transmembrane passes span 36–56, 95–115, and 131–151; these read LLYI…GLAV, LLGV…PFIE, and ILFL…TFPI.

This sequence belongs to the cytochrome b family. PetD subfamily. As to quaternary structure, the 4 large subunits of the cytochrome b6-f complex are cytochrome b6, subunit IV (17 kDa polypeptide, petD), cytochrome f and the Rieske protein, while the 4 small subunits are petG, petL, petM and petN. The complex functions as a dimer.

It localises to the plastid. Its subcellular location is the chloroplast thylakoid membrane. Functionally, component of the cytochrome b6-f complex, which mediates electron transfer between photosystem II (PSII) and photosystem I (PSI), cyclic electron flow around PSI, and state transitions. This chain is Cytochrome b6-f complex subunit 4, found in Chlamydomonas moewusii (Chlamydomonas eugametos).